We begin with the raw amino-acid sequence, 234 residues long: Sugar fermentation stimulation protein homolog (234 aa).

The protein belongs to the SfsA family.

The protein is Sugar fermentation stimulation protein homolog of Pseudoalteromonas atlantica (strain T6c / ATCC BAA-1087).